Here is a 60-residue protein sequence, read N- to C-terminus: uncharacterized protein (60 aa).

The helical transmembrane segment at 33–55 threads the bilayer; the sequence is FRLLRGIFLITLVIWTVVWLKLL.

This sequence belongs to the HHV-5 UL2 protein family.

The protein resides in the host membrane. This is an uncharacterized protein from Human cytomegalovirus (strain AD169) (HHV-5).